The primary structure comprises 23 residues: LIGLVSKGTCVLVKTVCKKVLKQ.

Position 23 is a glutamine amide (glutamine 23).

The protein belongs to the formicidae venom precursor-01 superfamily. Ant pilosulin family. Heterodimer with M-MIITX-Mp2a (pilosulin-3a) (AC Q26464); disulfide-linked. Only heterodimers (and not monomers) have been identified in the venom. Expressed by the venom gland.

The protein localises to the secreted. Heterodimer protein that may serve both defensive (pain-inducing) and predatory (insecticidal) roles. Has membrane-disrupting activity and shows induction of non-specific calcium influx into cells,. Shows broad-spectrum activity against a diverse range of bacteria, and cell lines, as well as hemolytic activity (EC(50)=2.18 uM). In vivo, shows moderate insecticidal activity against D.melanogaster and potent anthelmintic activity against the veterinary nematode H.contortus. In addition, intraplantar injection into mice induces nocifensive behavior and mechanical allodynia. This is M-myrmeciitoxin-Mp2b from Myrmecia pilosula (Jack jumper ant).